The following is a 91-amino-acid chain: Small ribosomal subunit protein uS19 (91 aa).

The protein belongs to the universal ribosomal protein uS19 family.

Protein S19 forms a complex with S13 that binds strongly to the 16S ribosomal RNA. The chain is Small ribosomal subunit protein uS19 from Chromohalobacter salexigens (strain ATCC BAA-138 / DSM 3043 / CIP 106854 / NCIMB 13768 / 1H11).